The primary structure comprises 729 residues: Polyribonucleotide nucleotidyltransferase (729 aa).

Mg(2+) contacts are provided by aspartate 516 and aspartate 522. A KH domain is found at 581-641 (PSTEHFSINP…EKVAAAKEHI (61 aa)). Positions 658-725 (GKTYVGKVKK…KGKKVELATP (68 aa)) constitute an S1 motif domain.

The protein belongs to the polyribonucleotide nucleotidyltransferase family. It depends on Mg(2+) as a cofactor.

The protein localises to the cytoplasm. The enzyme catalyses RNA(n+1) + phosphate = RNA(n) + a ribonucleoside 5'-diphosphate. Functionally, involved in mRNA degradation. Catalyzes the phosphorolysis of single-stranded polyribonucleotides processively in the 3'- to 5'-direction. This is Polyribonucleotide nucleotidyltransferase from Sulfurovum sp. (strain NBC37-1).